The primary structure comprises 406 residues: Argininosuccinate synthase (406 aa).

8–16 lines the ATP pocket; it reads AYSGGLDTS. Residue Y86 coordinates L-citrulline. G116 serves as a coordination point for ATP. Residues T118, N122, and D123 each contribute to the L-aspartate site. N122 contacts L-citrulline. Residues R126, S174, S183, E259, and Y271 each contribute to the L-citrulline site.

Belongs to the argininosuccinate synthase family. Type 1 subfamily. As to quaternary structure, homotetramer.

It localises to the cytoplasm. The enzyme catalyses L-citrulline + L-aspartate + ATP = 2-(N(omega)-L-arginino)succinate + AMP + diphosphate + H(+). It participates in amino-acid biosynthesis; L-arginine biosynthesis; L-arginine from L-ornithine and carbamoyl phosphate: step 2/3. The protein is Argininosuccinate synthase of Dehalococcoides mccartyi (strain ATCC BAA-2266 / KCTC 15142 / 195) (Dehalococcoides ethenogenes (strain 195)).